A 1468-amino-acid polypeptide reads, in one-letter code: ABC transporter G family member 34 (1468 aa).

Positions 33 to 53 are disordered; it reads NGAFSRSSSSSSRRMRGEEDD. Residues 178–450 enclose the ABC transporter 1 domain; that stretch reads ANALGILPTR…FELMGFKCPE (273 aa). Position 211 to 218 (211 to 218) interacts with ATP; that stretch reads GPPGSGKT. Positions 528–741 constitute an ABC transmembrane type-2 1 domain; it reads ELLKANIDRE…AQNAVSVNEF (214 aa). The next 6 helical transmembrane spans lie at 546 to 566, 575 to 595, 634 to 654, 666 to 686, 690 to 710, and 778 to 798; these read FVYIFRTIQLMTVSAMAMTVF, SVADGVIFMGALFFAVMMIML, SPMSFIEVGGFCFMSYYVIGF, LLMLAVSQMAAALFRFVGGAA, IVANVFGSFMLLIFMVLGGFI, and IGFGALLGFIMLFNILFTLAL. The ABC transporter 2 domain maps to 871–1123; the sequence is LTFEDIKYSV…ELIKYFEGIQ (253 aa). ATP is bound at residue 916–923; that stretch reads GVSGAGKT. The ABC transmembrane type-2 2 domain occupies 1196-1410; the sequence is IQCLACLWKQ…TLYGLIVSQY (215 aa). A run of 7 helical transmembrane segments spans residues 1217-1237, 1247-1267, 1303-1323, 1330-1350, 1360-1380, 1387-1407, and 1440-1460; these read AIRLFFTTVIALIFGTIFWDL, LFNAMGSMYAAVLFIGVLNGQ, FPYTLVQSVIYSIIVYSMIGF, FFWYLFFMFFTLLYFTFYGMM, VASIVSSAFYAIWNLFTGFVI, VWWRWYCWICPVAWTLYGLIV, and FVAVVIVAFTMLFAFLFGFAI.

It belongs to the ABC transporter superfamily. ABCG family. PDR (TC 3.A.1.205) subfamily.

It is found in the membrane. In terms of biological role, may be a general defense protein. The chain is ABC transporter G family member 34 from Oryza sativa subsp. japonica (Rice).